Consider the following 93-residue polypeptide: DNA-directed RNA polymerase subunit omega (93 aa).

Belongs to the RNA polymerase subunit omega family. In terms of assembly, the RNAP catalytic core consists of 2 alpha, 1 beta, 1 beta' and 1 omega subunit. When a sigma factor is associated with the core the holoenzyme is formed, which can initiate transcription.

It catalyses the reaction RNA(n) + a ribonucleoside 5'-triphosphate = RNA(n+1) + diphosphate. Promotes RNA polymerase assembly. Latches the N- and C-terminal regions of the beta' subunit thereby facilitating its interaction with the beta and alpha subunits. The sequence is that of DNA-directed RNA polymerase subunit omega from Acinetobacter baylyi (strain ATCC 33305 / BD413 / ADP1).